A 75-amino-acid polypeptide reads, in one-letter code: UPF0352 protein VIBHAR_03027 (75 aa).

This sequence belongs to the UPF0352 family.

In Vibrio campbellii (strain ATCC BAA-1116), this protein is UPF0352 protein VIBHAR_03027.